Here is a 244-residue protein sequence, read N- to C-terminus: tRNA pseudouridine synthase A (244 aa).

The active-site Nucleophile is the aspartate 53. Residue tyrosine 111 coordinates substrate.

The protein belongs to the tRNA pseudouridine synthase TruA family. As to quaternary structure, homodimer.

It catalyses the reaction uridine(38/39/40) in tRNA = pseudouridine(38/39/40) in tRNA. Functionally, formation of pseudouridine at positions 38, 39 and 40 in the anticodon stem and loop of transfer RNAs. The chain is tRNA pseudouridine synthase A from Bacillus sp. (strain KSM-64).